A 61-amino-acid chain; its full sequence is Small ribosomal subunit protein uS14 (61 aa).

Zn(2+)-binding residues include C24, C27, C40, and C43.

It belongs to the universal ribosomal protein uS14 family. Zinc-binding uS14 subfamily. Part of the 30S ribosomal subunit. Contacts proteins S3 and S10. The cofactor is Zn(2+).

Functionally, binds 16S rRNA, required for the assembly of 30S particles and may also be responsible for determining the conformation of the 16S rRNA at the A site. This is Small ribosomal subunit protein uS14 from Mycobacterium sp. (strain JLS).